Reading from the N-terminus, the 287-residue chain is Oxaloacetate decarboxylase (287 aa).

Ser-50 provides a ligand contact to substrate. Asp-88 serves as a coordination point for Mg(2+). Arg-159 and His-235 together coordinate substrate.

The protein belongs to the isocitrate lyase family. Oxaloacetate decarboxylase subfamily. As to quaternary structure, homotetramer; dimer of dimers. Requires Mg(2+) as cofactor.

It catalyses the reaction oxaloacetate + H(+) = pyruvate + CO2. Its function is as follows. Catalyzes the decarboxylation of oxaloacetate into pyruvate. Seems to play a role in maintaining cellular concentrations of bicarbonate and pyruvate. The polypeptide is Oxaloacetate decarboxylase (Pseudomonas aeruginosa (strain LESB58)).